Consider the following 564-residue polypeptide: Pumilio homolog 9 (564 aa).

A PUM-HD domain is found at 222-564; it reads LEDTVLIGQG…KIFSKTILKK (343 aa). 8 Pumilio repeats span residues 249 to 284, 285 to 320, 321 to 359, 361 to 396, 397 to 432, 433 to 469, 470 to 501, and 502 to 539; these read EIYG…VILL, AIID…LIVS, VLTS…ALVK, GLKP…FVLE, AATK…RLVA, EISR…VQFR, MHYA…EIVR, and ELLC…KLVA.

The protein localises to the cytoplasm. Sequence-specific RNA-binding protein that regulates translation and mRNA stability by binding the 3'-UTR of target mRNAs. This is Pumilio homolog 9 (APUM9) from Arabidopsis thaliana (Mouse-ear cress).